Here is a 383-residue protein sequence, read N- to C-terminus: Glucose-1-phosphate adenylyltransferase (383 aa).

Residues tyrosine 100, glycine 165, 180 to 181 (EK), and serine 191 each bind alpha-D-glucose 1-phosphate.

This sequence belongs to the bacterial/plant glucose-1-phosphate adenylyltransferase family. As to quaternary structure, homotetramer.

It catalyses the reaction alpha-D-glucose 1-phosphate + ATP + H(+) = ADP-alpha-D-glucose + diphosphate. It functions in the pathway glycan biosynthesis; glycogen biosynthesis. Its function is as follows. Involved in the biosynthesis of ADP-glucose, a building block required for the elongation reactions to produce glycogen. Catalyzes the reaction between ATP and alpha-D-glucose 1-phosphate (G1P) to produce pyrophosphate and ADP-Glc. The sequence is that of Glucose-1-phosphate adenylyltransferase from Clostridium kluyveri (strain ATCC 8527 / DSM 555 / NBRC 12016 / NCIMB 10680 / K1).